The primary structure comprises 644 residues: MASDYYSSDDEGFGEKVGLIGEKDRFEAETIHVIEVSQHEADIQKAKQRSLATHEAEKLDLATHEAEQLDLAIQEFSRQEEEEERRRTRELENDAQIANVLQHEERERLINKKTALEDEEDELLARTLEESLKENNRRKMFEEQVNKDEQLALIVQESLNMEEYPIRLEEYKSISRRAPLDVDEQFAKAVKESLKNKGKGKQFEDEQVKKDEQLALIVQESLNMVESPPRLEENNNISTRAPVDEDEQLAKAVEESLKGKGQIKQSKDEVEGDGMLLELNPPPSLCGGCNFAVEHGGSVNILGVLWHPGCFCCRACHKPIAIHDIENHVSNSRGKFHKSCYERYCYVCKEKKMKTYNNHPFWEERYCPVHEADGTPKCCSCERLEPRESNYVMLADGRWLCLECMNSAVMDSDECQPLHFDMRDFFEGLNMKIEKEFPFLLVEKQALNKAEKEEKIDYQYEVVTRGICLSEEQIVDSVSQRPVRGPNNKLVGMATESQKVTRECEVTAILILYGLPRLLTGYILAHEMMHAYLRLNGHRNLNNILEEGICQVLGHLWLDSQTYATADATADASSSASSSSRTPPAASASKKGEWSDFDKKLVEFCKNQIETDDSPVYGLGFRTVNEMVTNSSLQETLKEILRQR.

UIM domains follow at residues 119–138 (EEDE…NNRR), 181–200 (DVDE…KGKG), and 244–263 (DEDE…KGQI). The LIM zinc-binding domain occupies 284–355 (SLCGGCNFAV…YVCKEKKMKT (72 aa)). Residues 572–589 (ASSSASSSSRTPPAASAS) are compositionally biased toward low complexity. The disordered stretch occupies residues 572–591 (ASSSASSSSRTPPAASASKK).

As to quaternary structure, interacts with ubiquitin.

In terms of biological role, ubiquitin receptor that probably regulates developmental process. In Arabidopsis thaliana (Mouse-ear cress), this protein is Protein DA1-related 6 (DAR6).